The chain runs to 468 residues: ATP synthase subunit beta (468 aa).

Position 148–155 (148–155) interacts with ATP; the sequence is GGAGVGKT.

It belongs to the ATPase alpha/beta chains family. F-type ATPases have 2 components, CF(1) - the catalytic core - and CF(0) - the membrane proton channel. CF(1) has five subunits: alpha(3), beta(3), gamma(1), delta(1), epsilon(1). CF(0) has three main subunits: a(1), b(2) and c(9-12). The alpha and beta chains form an alternating ring which encloses part of the gamma chain. CF(1) is attached to CF(0) by a central stalk formed by the gamma and epsilon chains, while a peripheral stalk is formed by the delta and b chains.

It localises to the cell inner membrane. The enzyme catalyses ATP + H2O + 4 H(+)(in) = ADP + phosphate + 5 H(+)(out). Its function is as follows. Produces ATP from ADP in the presence of a proton gradient across the membrane. The catalytic sites are hosted primarily by the beta subunits. The polypeptide is ATP synthase subunit beta (Xanthomonas oryzae pv. oryzae (strain KACC10331 / KXO85)).